The primary structure comprises 105 residues: MDKKEIFDALDDFSQNLLTTLAEVDAIKKHLQGVIDENTTLRLENSKLRERLEKEDKTGHKSSNFGKENLENIYEDGFHICTFSYGQRRDNDEPCMFCVELLNRD.

Zn(2+) is bound by residues histidine 79, cysteine 81, cysteine 95, and cysteine 98.

The protein belongs to the YabA family. Homotetramer. Interacts with both DnaA and DnaN, acting as a bridge between these two proteins. Requires Zn(2+) as cofactor.

It localises to the cytoplasm. It is found in the nucleoid. In terms of biological role, involved in control of chromosome replication initiation. Inhibits the cooperative binding of DnaA to the oriC region, thus negatively regulating initiation of chromosome replication. Inhibits the ability of DnaA-ATP to form a helix on DNA; does not disassemble preformed DnaA-DNA helices. Decreases the residence time of DnaA on the chromosome at its binding sites (oriC, replication forks and promoter-binding sites). Tethers DnaA to the replication machinery via the DNA polymerase beta sliding clamp subunit (dnaN). Associates with oriC and other DnaA targets on the chromosome in a DnaA-dependent manner. This is Replication initiation control protein YabA from Streptococcus suis (strain 98HAH33).